Reading from the N-terminus, the 379-residue chain is Salicylate/benzoate carboxyl methyltransferase (379 aa).

Tyr40 provides a ligand contact to S-adenosyl-L-homocysteine. Gln47 contacts salicylate. The S-adenosyl-L-homocysteine site is built by Cys82, Asn87, Asp119, Leu120, Ser155, and Phe156. Salicylate is bound by residues His176 and Trp177. Asn188, Asp275, Phe277, and Asn278 together coordinate Mg(2+).

This sequence belongs to the methyltransferase superfamily. Type-7 methyltransferase family. SABATH subfamily. Homodimer. Mg(2+) serves as cofactor. Expressed in flowers and at lower levels in leaves and stems. Hardly detected in roots and siliques. Expressed in the sepals and the leaf trichomes and hydathodes.

It catalyses the reaction benzoate + S-adenosyl-L-methionine = methyl benzoate + S-adenosyl-L-homocysteine. The catalysed reaction is salicylate + S-adenosyl-L-methionine = methyl salicylate + S-adenosyl-L-homocysteine. Methyltransferase involved in the biosynthesis of methylsalicylate in response to stresses. Utilizes salicylic acid (SA) more efficiently than benzoic acid (BA). Can also use anthranilic acid and m-hydroxybenzoic acid as substrate. In Arabidopsis thaliana (Mouse-ear cress), this protein is Salicylate/benzoate carboxyl methyltransferase (BSMT1).